Consider the following 120-residue polypeptide: Small ribosomal subunit protein uS13 (120 aa).

The tract at residues R92–K120 is disordered.

This sequence belongs to the universal ribosomal protein uS13 family. As to quaternary structure, part of the 30S ribosomal subunit. Forms a loose heterodimer with protein S19. Forms two bridges to the 50S subunit in the 70S ribosome.

Functionally, located at the top of the head of the 30S subunit, it contacts several helices of the 16S rRNA. In the 70S ribosome it contacts the 23S rRNA (bridge B1a) and protein L5 of the 50S subunit (bridge B1b), connecting the 2 subunits; these bridges are implicated in subunit movement. Contacts the tRNAs in the A and P-sites. This chain is Small ribosomal subunit protein uS13, found in Laribacter hongkongensis (strain HLHK9).